The primary structure comprises 511 residues: UPF0288 protein MK0796 (511 aa).

It belongs to the UPF0288 family.

The sequence is that of UPF0288 protein MK0796 from Methanopyrus kandleri (strain AV19 / DSM 6324 / JCM 9639 / NBRC 100938).